Reading from the N-terminus, the 191-residue chain is Lipoprotein signal peptidase (191 aa).

3 helical membrane passes run Val-26 to Trp-46, Ala-84 to Trp-104, and Phe-110 to Leu-130. Catalysis depends on residues Asp-137 and Asp-163. A helical transmembrane segment spans residues Phe-156–Ala-176.

The protein belongs to the peptidase A8 family.

Its subcellular location is the cell membrane. The catalysed reaction is Release of signal peptides from bacterial membrane prolipoproteins. Hydrolyzes -Xaa-Yaa-Zaa-|-(S,diacylglyceryl)Cys-, in which Xaa is hydrophobic (preferably Leu), and Yaa (Ala or Ser) and Zaa (Gly or Ala) have small, neutral side chains.. The protein operates within protein modification; lipoprotein biosynthesis (signal peptide cleavage). This protein specifically catalyzes the removal of signal peptides from prolipoproteins. The protein is Lipoprotein signal peptidase of Deinococcus radiodurans (strain ATCC 13939 / DSM 20539 / JCM 16871 / CCUG 27074 / LMG 4051 / NBRC 15346 / NCIMB 9279 / VKM B-1422 / R1).